The sequence spans 421 residues: Glutamyl-tRNA reductase (421 aa).

Substrate-binding positions include 49-52 (TCNR), Ser109, 114-116 (EPQ), and Gln120. Catalysis depends on Cys50, which acts as the Nucleophile. Residue 189–194 (GLGQIG) coordinates NADP(+).

It belongs to the glutamyl-tRNA reductase family. In terms of assembly, homodimer.

The catalysed reaction is (S)-4-amino-5-oxopentanoate + tRNA(Glu) + NADP(+) = L-glutamyl-tRNA(Glu) + NADPH + H(+). The protein operates within porphyrin-containing compound metabolism; protoporphyrin-IX biosynthesis; 5-aminolevulinate from L-glutamyl-tRNA(Glu): step 1/2. Its function is as follows. Catalyzes the NADPH-dependent reduction of glutamyl-tRNA(Glu) to glutamate 1-semialdehyde (GSA). The sequence is that of Glutamyl-tRNA reductase from Limosilactobacillus reuteri (strain DSM 20016) (Lactobacillus reuteri).